A 379-amino-acid chain; its full sequence is Pentatricopeptide repeat-containing protein At3g25210, mitochondrial (379 aa).

PPR repeat units follow at residues 142 to 177 (SVPL…DDSK), 179 to 221 (DLET…GVIP), 222 to 256 (DTFV…GSEP), 257 to 291 (NAYT…GMVP), 292 to 326 (NGSC…SLSP), and 327 to 361 (DMLT…DPVM).

This sequence belongs to the PPR family. P subfamily.

Its subcellular location is the mitochondrion. In Arabidopsis thaliana (Mouse-ear cress), this protein is Pentatricopeptide repeat-containing protein At3g25210, mitochondrial.